The primary structure comprises 197 residues: Carnitine operon protein CaiE (197 aa).

It belongs to the transferase hexapeptide repeat family.

The protein operates within amine and polyamine metabolism; carnitine metabolism. Its function is as follows. Overproduction of CaiE stimulates the activity of CaiB and CaiD. In Citrobacter koseri (strain ATCC BAA-895 / CDC 4225-83 / SGSC4696), this protein is Carnitine operon protein CaiE.